The chain runs to 295 residues: Indole-3-glycerol phosphate synthase (295 aa).

This sequence belongs to the TrpC family.

It carries out the reaction 1-(2-carboxyphenylamino)-1-deoxy-D-ribulose 5-phosphate + H(+) = (1S,2R)-1-C-(indol-3-yl)glycerol 3-phosphate + CO2 + H2O. It functions in the pathway amino-acid biosynthesis; L-tryptophan biosynthesis; L-tryptophan from chorismate: step 4/5. The polypeptide is Indole-3-glycerol phosphate synthase (Prochlorococcus marinus (strain AS9601)).